The primary structure comprises 233 residues: Large ribosomal subunit protein eL6y (233 aa).

Positions 48-72 are enriched in basic and acidic residues; the sequence is HDAKSKVDAPVEKPPKFYPAEDVKK. The tract at residues 48–82 is disordered; the sequence is HDAKSKVDAPVEKPPKFYPAEDVKKPLPNRRTAKP.

It belongs to the eukaryotic ribosomal protein eL6 family.

In Arabidopsis thaliana (Mouse-ear cress), this protein is Large ribosomal subunit protein eL6y (RPL6B).